The sequence spans 112 residues: uncharacterized protein (112 aa).

Helical transmembrane passes span 7–26 and 36–58; these read PSFHFFIFFFLFCLLRTLDY and TYMHIKLFFSYYFRFVHLFFFLY.

The protein resides in the membrane. This is an uncharacterized protein from Saccharomyces cerevisiae (strain ATCC 204508 / S288c) (Baker's yeast).